The chain runs to 499 residues: Thermostable carboxypeptidase 1 (499 aa).

The Peptidase M32 domain occupies 6-499 (QNETIKQILA…FVRWVKEKYL (494 aa)). Positions 238-240 (HPF) match the HPF motif. Residues 248–252 (DVRIT) carry the DXRXT motif. His269 lines the Co(2+) pocket. An HEXXH motif is present at residues 269 to 273 (HEFGH). Glu270 serves as the catalytic Proton donor/acceptor. His273 and Glu299 together coordinate Co(2+). The HES/GQ signature appears at 298–301 (HESQ). The I/NRXXA/SD motif lies at 350 to 355 (IRTEAD). The GXXQDXHW signature appears at 405 to 412 (GILQDIHW).

This sequence belongs to the peptidase M32 family. As to quaternary structure, homodimer. It depends on Co(2+) as a cofactor. The cofactor is Mn(2+).

It catalyses the reaction Release of a C-terminal amino acid with broad specificity, except for -Pro.. Its activity is regulated as follows. EDTA and DTT reversibly abolish carboxypeptidase activity. Functionally, broad specificity carboxypetidase that releases amino acids sequentially from the C-terminus, including neutral, aromatic, polar and basic residues, but not Pro, Gly, Asp and Glu. The chain is Thermostable carboxypeptidase 1 from Pyrococcus furiosus (strain ATCC 43587 / DSM 3638 / JCM 8422 / Vc1).